Consider the following 620-residue polypeptide: Chaperone protein HscA homolog (620 aa).

The protein belongs to the heat shock protein 70 family.

Functionally, chaperone involved in the maturation of iron-sulfur cluster-containing proteins. Has a low intrinsic ATPase activity which is markedly stimulated by HscB. The polypeptide is Chaperone protein HscA homolog (Colwellia psychrerythraea (strain 34H / ATCC BAA-681) (Vibrio psychroerythus)).